The primary structure comprises 350 residues: 5'-tyrosyl-DNA phosphodiesterase (350 aa).

The interval 113-117 (NIDGL) is interaction with 5' end of substrate DNA. 2 residues coordinate Mg(2+): Asp-115 and Glu-145. An interaction with 5' end of substrate DNA region spans residues 219-224 (HLESMR). Catalysis depends on Asp-258, which acts as the Proton donor/acceptor. Residues 260–262 (NLR) are interaction with 5' end of substrate DNA.

Belongs to the CCR4/nocturin family. TTRAP/TDP2 subfamily. Mg(2+) serves as cofactor. Mn(2+) is required as a cofactor.

The protein resides in the nucleus. It is found in the PML body. In terms of biological role, DNA repair enzyme that can remove a variety of covalent adducts from DNA through hydrolysis of a 5'-phosphodiester bond, giving rise to DNA with a free 5' phosphate. Catalyzes the hydrolysis of dead-end complexes between DNA and the topoisomerase 2 (top2) active site tyrosine residue. Hydrolyzes 5'-phosphoglycolates on protruding 5' ends on DNA double-strand breaks (DSBs) due to DNA damage by radiation and free radicals. In Caenorhabditis briggsae, this protein is 5'-tyrosyl-DNA phosphodiesterase.